A 183-amino-acid polypeptide reads, in one-letter code: Adenine phosphoribosyltransferase (183 aa).

The protein belongs to the purine/pyrimidine phosphoribosyltransferase family. In terms of assembly, homodimer.

The protein localises to the cytoplasm. It catalyses the reaction AMP + diphosphate = 5-phospho-alpha-D-ribose 1-diphosphate + adenine. Its pathway is purine metabolism; AMP biosynthesis via salvage pathway; AMP from adenine: step 1/1. Catalyzes a salvage reaction resulting in the formation of AMP, that is energically less costly than de novo synthesis. This is Adenine phosphoribosyltransferase from Shewanella piezotolerans (strain WP3 / JCM 13877).